Here is a 113-residue protein sequence, read N- to C-terminus: U11-theraphotoxin-Hhn1g (113 aa).

The signal sequence occupies residues 1 to 21; the sequence is MNTVRVTFLLVFVLAVSLGQA. Positions 22 to 74 are excised as a propeptide; the sequence is DKDENRMEMQEKTEQGKSYLDFAENLLLQKLEELEAKLLEEDSEESRNSRQKR. Residues 61–83 form a disordered region; sequence EEDSEESRNSRQKRCIGEGVPCD. Cystine bridges form between Cys-75–Cys-90, Cys-82–Cys-95, and Cys-89–Cys-110.

This sequence belongs to the neurotoxin 14 (magi-1) family. 01 (HNTX-16) subfamily. As to expression, expressed by the venom gland.

It localises to the secreted. Probable ion channel inhibitor. The polypeptide is U11-theraphotoxin-Hhn1g (Cyriopagopus hainanus (Chinese bird spider)).